Reading from the N-terminus, the 191-residue chain is Large ribosomal subunit protein bL9c (191 aa).

The N-terminal 35 residues, Met1–Ala35, are a transit peptide targeting the chloroplast.

It belongs to the bacterial ribosomal protein bL9 family. Part of the 50S ribosomal subunit.

It localises to the plastid. The protein resides in the chloroplast. Binds to the 23S rRNA. The sequence is that of Large ribosomal subunit protein bL9c (RPL9) from Triticum aestivum (Wheat).